Consider the following 227-residue polypeptide: Cytochrome c oxidase subunit 2 (227 aa).

At 1–14 (MAYPFQLGFQDATS) the chain is on the mitochondrial intermembrane side. The helical transmembrane segment at 15 to 45 (PIMEELLHFHDHTLMIVFLISSLVLYIITLM) threads the bilayer. At 46–59 (LTTKLTHTSTMDAQ) the chain is on the mitochondrial matrix side. The helical transmembrane segment at 60–87 (EVETVWTILPAIILILIALPSLRILYMM) threads the bilayer. The Mitochondrial intermembrane portion of the chain corresponds to 88-227 (DEVNNPSLTV…FFEKWSASML (140 aa)). Cu cation contacts are provided by H161, C196, E198, C200, H204, and M207. E198 lines the Mg(2+) pocket.

The protein belongs to the cytochrome c oxidase subunit 2 family. Component of the cytochrome c oxidase (complex IV, CIV), a multisubunit enzyme composed of 14 subunits. The complex is composed of a catalytic core of 3 subunits MT-CO1, MT-CO2 and MT-CO3, encoded in the mitochondrial DNA, and 11 supernumerary subunits COX4I, COX5A, COX5B, COX6A, COX6B, COX6C, COX7A, COX7B, COX7C, COX8 and NDUFA4, which are encoded in the nuclear genome. The complex exists as a monomer or a dimer and forms supercomplexes (SCs) in the inner mitochondrial membrane with NADH-ubiquinone oxidoreductase (complex I, CI) and ubiquinol-cytochrome c oxidoreductase (cytochrome b-c1 complex, complex III, CIII), resulting in different assemblies (supercomplex SCI(1)III(2)IV(1) and megacomplex MCI(2)III(2)IV(2)). Found in a complex with TMEM177, COA6, COX18, COX20, SCO1 and SCO2. Interacts with TMEM177 in a COX20-dependent manner. Interacts with COX20. Interacts with COX16. Requires Cu cation as cofactor.

It localises to the mitochondrion inner membrane. The enzyme catalyses 4 Fe(II)-[cytochrome c] + O2 + 8 H(+)(in) = 4 Fe(III)-[cytochrome c] + 2 H2O + 4 H(+)(out). Functionally, component of the cytochrome c oxidase, the last enzyme in the mitochondrial electron transport chain which drives oxidative phosphorylation. The respiratory chain contains 3 multisubunit complexes succinate dehydrogenase (complex II, CII), ubiquinol-cytochrome c oxidoreductase (cytochrome b-c1 complex, complex III, CIII) and cytochrome c oxidase (complex IV, CIV), that cooperate to transfer electrons derived from NADH and succinate to molecular oxygen, creating an electrochemical gradient over the inner membrane that drives transmembrane transport and the ATP synthase. Cytochrome c oxidase is the component of the respiratory chain that catalyzes the reduction of oxygen to water. Electrons originating from reduced cytochrome c in the intermembrane space (IMS) are transferred via the dinuclear copper A center (CU(A)) of subunit 2 and heme A of subunit 1 to the active site in subunit 1, a binuclear center (BNC) formed by heme A3 and copper B (CU(B)). The BNC reduces molecular oxygen to 2 water molecules using 4 electrons from cytochrome c in the IMS and 4 protons from the mitochondrial matrix. In Balaenoptera musculus (Blue whale), this protein is Cytochrome c oxidase subunit 2 (MT-CO2).